The chain runs to 874 residues: Probable inorganic carbon transporter subunit DabA (874 aa).

Zn(2+) contacts are provided by cysteine 398, aspartate 400, histidine 580, and cysteine 595.

Belongs to the inorganic carbon transporter (TC 9.A.2) DabA family. In terms of assembly, forms a complex with DabB. Zn(2+) is required as a cofactor.

The protein localises to the cell membrane. Its function is as follows. Part of an energy-coupled inorganic carbon pump. The polypeptide is Probable inorganic carbon transporter subunit DabA (Bacillus cytotoxicus (strain DSM 22905 / CIP 110041 / 391-98 / NVH 391-98)).